A 146-amino-acid polypeptide reads, in one-letter code: ATP synthase epsilon chain (146 aa).

Residues 103–122 (SAKKRAEQHMQEAKEKHNER) form a disordered region.

It belongs to the ATPase epsilon chain family. F-type ATPases have 2 components, CF(1) - the catalytic core - and CF(0) - the membrane proton channel. CF(1) has five subunits: alpha(3), beta(3), gamma(1), delta(1), epsilon(1). CF(0) has three main subunits: a, b and c.

It is found in the cell membrane. In terms of biological role, produces ATP from ADP in the presence of a proton gradient across the membrane. This chain is ATP synthase epsilon chain, found in Lactobacillus johnsonii (strain CNCM I-12250 / La1 / NCC 533).